The primary structure comprises 108 residues: ER membrane protein complex subunit 6 (108 aa).

3 helical membrane-spanning segments follow: residues V21–G41, Y45–L65, and I86–V106.

This sequence belongs to the EMC6 family.

Its subcellular location is the endoplasmic reticulum membrane. This Schizosaccharomyces pombe (strain 972 / ATCC 24843) (Fission yeast) protein is ER membrane protein complex subunit 6.